A 253-amino-acid chain; its full sequence is Tryptophan synthase alpha chain (253 aa).

Active-site proton acceptor residues include glutamate 45 and aspartate 56.

Belongs to the TrpA family. As to quaternary structure, tetramer of two alpha and two beta chains.

The enzyme catalyses (1S,2R)-1-C-(indol-3-yl)glycerol 3-phosphate + L-serine = D-glyceraldehyde 3-phosphate + L-tryptophan + H2O. The protein operates within amino-acid biosynthesis; L-tryptophan biosynthesis; L-tryptophan from chorismate: step 5/5. In terms of biological role, the alpha subunit is responsible for the aldol cleavage of indoleglycerol phosphate to indole and glyceraldehyde 3-phosphate. The sequence is that of Tryptophan synthase alpha chain from Flavobacterium psychrophilum (strain ATCC 49511 / DSM 21280 / CIP 103535 / JIP02/86).